The sequence spans 215 residues: Casparian strip membrane protein 3 (215 aa).

A disordered region spans residues 1 to 26; that stretch reads MDSEKTGEAKITIQEPKAADPKGKGI. The Cytoplasmic portion of the chain corresponds to 1-55; the sequence is MDSEKTGEAKITIQEPKAADPKGKGIADAPPPPVVVTTAKAIQKLPRGGWKKGVA. Residues 56–76 form a helical membrane-spanning segment; it reads IFDFVVRLCAIATGLAATGIM. The Extracellular portion of the chain corresponds to 77–101; it reads GTTEQTLPFFTQFFQFHAEYNDLPT. Residues 102 to 122 traverse the membrane as a helical segment; the sequence is FMFFVFANGIASGYLILSLPF. Residues 123 to 136 lie on the Cytoplasmic side of the membrane; the sequence is SIVCIVRPLAIVPR. Residues 137-157 form a helical membrane-spanning segment; it reads LLLIIFDTVVMALTIAAASAA. Over 158 to 189 the chain is Extracellular; the sequence is AAIVYLAHNGNSNANWNAICQQFNDFCQQTST. The chain crosses the membrane as a helical span at residues 190–210; it reads AVVASFITAAMLTFLIVLSAF. The Cytoplasmic segment spans residues 211 to 215; sequence ALKRN.

The protein belongs to the Casparian strip membrane proteins (CASP) family. In terms of assembly, homodimer and heterodimers.

Its subcellular location is the cell membrane. Its function is as follows. Regulates membrane-cell wall junctions and localized cell wall deposition. Required for establishment of the Casparian strip membrane domain (CSD) and the subsequent formation of Casparian strips, a cell wall modification of the root endodermis that determines an apoplastic barrier between the intraorganismal apoplasm and the extraorganismal apoplasm and prevents lateral diffusion. This is Casparian strip membrane protein 3 from Ricinus communis (Castor bean).